A 260-amino-acid polypeptide reads, in one-letter code: Archaerhodopsin-1 (260 aa).

The propeptide occupies 1–6 (MDPIAL). Topologically, residues 7–20 (TAAVGADLLGDGRP) are extracellular. The helical transmembrane segment at 21–42 (ETLWLGIGTLLMLIGTFYFIVK) threads the bilayer. The Cytoplasmic segment spans residues 43-51 (GWGVTDKEA). A helical membrane pass occupies residues 52-73 (REYYSITILVPGIASAAYLSMF). The Extracellular portion of the chain corresponds to 74 to 91 (FGIGLTEVQVGSEMLDIY). A helical membrane pass occupies residues 92–113 (YARYADWLFTTPLLLLDLALLA). Topologically, residues 114–116 (KVD) are cytoplasmic. Residues 117-139 (RVSIGTLVGVDALMIVTGLVGAL) traverse the membrane as a helical segment. Residues 140–143 (SHTP) lie on the Extracellular side of the membrane. Residues 144–172 (LARYTWWLFSTICMIVVLYFLATSLRAAA) form a helical membrane-spanning segment. The Cytoplasmic portion of the chain corresponds to 173–176 (KERG). A helical membrane pass occupies residues 177–204 (PEVASTFNTLTALVLVLWTAYPILWIIG). Residues 205 to 212 (TEGAGVVG) are Extracellular-facing. The helical transmembrane segment at 213–245 (LGIETLLFMVLDVTAKVGFGFILLRSRAILGDT) threads the bilayer. An N6-(retinylidene)lysine modification is found at K228. At 246 to 260 (EAPEPSAGAEASAAD) the chain is on the cytoplasmic side.

It belongs to the archaeal/bacterial/fungal opsin family.

The protein localises to the cell membrane. In terms of biological role, light-driven proton pump. It may interact with bacterioruberin in the claret membrane. In Halorubrum ezzemoulense (Halorubrum chaoviator), this protein is Archaerhodopsin-1.